We begin with the raw amino-acid sequence, 181 residues long: Putative manganese efflux pump MntP (181 aa).

Helical transmembrane passes span Val-4–Ala-24, Val-31–Ile-51, Met-59–Ala-79, Val-102–Thr-122, Leu-129–Ile-149, and Ala-161–Val-181.

This sequence belongs to the MntP (TC 9.B.29) family.

It is found in the cell inner membrane. In terms of biological role, probably functions as a manganese efflux pump. This is Putative manganese efflux pump MntP from Saccharophagus degradans (strain 2-40 / ATCC 43961 / DSM 17024).